A 416-amino-acid polypeptide reads, in one-letter code: Keratin, type I cuticular Ha1 (416 aa).

A head region spans residues 2 to 56; that stretch reads PYNCCLPALSCRTSCSSRPCVPPSCHGCTLPGACNIPANVGNCNWFCEGSFNGNE. The IF rod domain occupies 56-367; sequence EKETMQFLND…GLLESEDCKL (312 aa). Residues 57–91 are coil 1A; sequence KETMQFLNDRLASYMEKVRQLERENAELECRIQER. The linker 1 stretch occupies residues 92–102; the sequence is NQQQDPLVCPA. Residues 103-203 are coil 1B; the sequence is YQAYFRTIEE…HEEEVNTLRC (101 aa). A linker 12 region spans residues 204–219; that stretch reads QLGDRLNVEVDAAPTV. The tract at residues 220 to 363 is coil 2; it reads DLNRVLNETR…NTYRGLLESE (144 aa). The interval 364-416 is tail; sequence DCKLPCNPCATSNACGKPIGPCVSNPCVPCPPPAPCTPCVPRPRCGPCNSFVR.

This sequence belongs to the intermediate filament family.

This is Keratin, type I cuticular Ha1 (Krt31) from Mus musculus (Mouse).